The following is a 643-amino-acid chain: Lysophospholipase ARB_05919 (643 aa).

The first 22 residues, 1 to 22 (MMFIPATLGTFVLASLLPATVG), serve as a signal peptide directing secretion. The PLA2c domain maps to 50-597 (DCPSTKPAVR…KMYCWDGTLN (548 aa)). 12 N-linked (GlcNAc...) asparagine glycosylation sites follow: Asn-142, Asn-176, Asn-195, Asn-293, Asn-466, Asn-472, Asn-482, Asn-503, Asn-524, Asn-533, Asn-552, and Asn-597.

This sequence belongs to the lysophospholipase family.

The protein resides in the secreted. The enzyme catalyses a 1-acyl-sn-glycero-3-phosphocholine + H2O = sn-glycerol 3-phosphocholine + a fatty acid + H(+). In terms of biological role, catalyzes the release of fatty acids from lysophospholipids. Phospholipase B may well contribute to pathogenicity by abetting the fungus in damaging host cell membranes. The sequence is that of Lysophospholipase ARB_05919 from Arthroderma benhamiae (strain ATCC MYA-4681 / CBS 112371) (Trichophyton mentagrophytes).